Reading from the N-terminus, the 168-residue chain is DNA-binding protein inhibitor ID-1 (168 aa).

Positions 46 to 98 (LPALLDEQQVNVLLYDMNGCYSRLKELVPTLPQNRKVSKVEILQHVIDYIRDL) constitute a bHLH domain. Positions 53–106 (QQVNVLLYDMNGCYSRLKELVPTLPQNRKVSKVEILQHVIDYIRDLQLELNSES) are interaction with IFI204. The short motif at 91–104 (VIDYIRDLQLELNS) is the Nuclear export signal element.

As to quaternary structure, heterodimer with other HLH proteins. Interacts with CLOCK and BMAL1. Interacts with COPS5, IFI204, GATA4 and NKX2-5. Post-translationally, polyubiquitinated; which is favored by Ifi204 and leads to proteasomal degradation.

The protein resides in the cytoplasm. It is found in the nucleus. In terms of biological role, transcriptional regulator (lacking a basic DNA binding domain) which negatively regulates the basic helix-loop-helix (bHLH) transcription factors by forming heterodimers and inhibiting their DNA binding and transcriptional activity. Implicated in regulating a variety of cellular processes, including cellular growth, senescence, differentiation, apoptosis, angiogenesis, and neoplastic transformation. Inhibits skeletal muscle and cardiac myocyte differentiation. Regulates the circadian clock by repressing the transcriptional activator activity of the CLOCK-BMAL1 heterodimer. In Mus musculus (Mouse), this protein is DNA-binding protein inhibitor ID-1 (Id1).